We begin with the raw amino-acid sequence, 132 residues long: Ribosome-binding factor A (132 aa).

Belongs to the RbfA family. As to quaternary structure, monomer. Binds 30S ribosomal subunits, but not 50S ribosomal subunits or 70S ribosomes.

It is found in the cytoplasm. Its function is as follows. One of several proteins that assist in the late maturation steps of the functional core of the 30S ribosomal subunit. Associates with free 30S ribosomal subunits (but not with 30S subunits that are part of 70S ribosomes or polysomes). Required for efficient processing of 16S rRNA. May interact with the 5'-terminal helix region of 16S rRNA. The sequence is that of Ribosome-binding factor A from Pectobacterium atrosepticum (strain SCRI 1043 / ATCC BAA-672) (Erwinia carotovora subsp. atroseptica).